Here is a 276-residue protein sequence, read N- to C-terminus: NAD(+)--protein-threonine ADP-ribosyltransferase (276 aa).

As to quaternary structure, interacts directly with host ubiquitin.

It localises to the secreted. The protein localises to the host cell. It catalyses the reaction L-threonyl-[protein] + NAD(+) = O-(ADP-D-ribosyl)-L-threonyl-[protein] + nicotinamide + H(+). In terms of biological role, ADP-ribosyltransferase that specifically modifies host ubiquitin on 'Thr-66' residue, which causes the shutdown of polyubiquitin synthesis and disrupts the recognition and reversal of polyubiquitin in host cells during infection. Threonine ADP-ribosylation of ubiquitin prevents the transfer of ubiquitin from ubiquitin-activating enzyme E1 to ubiquitin-conjugating enzyme E2, which inhibits subsequent ubiquitin activation and leads to the shutdown of polyubiquitin synthesis in host cells. The modification also causes dysfunction of polyubiquitin chains in cells, thereby blocking host ubiquitin signaling. ADP-ribosylation by CteC is likely irreversible. Plays a crucial role in bacterial colonization in mice during infection. The protein is NAD(+)--protein-threonine ADP-ribosyltransferase of Chromobacterium violaceum (strain ATCC 12472 / DSM 30191 / JCM 1249 / CCUG 213 / NBRC 12614 / NCIMB 9131 / NCTC 9757 / MK).